We begin with the raw amino-acid sequence, 131 residues long: Phosphomevalonate dehydratase small subunit (131 aa).

The Proton acceptor role is filled by S62.

Belongs to the AcnX type II small subunit family. As to quaternary structure, heterodimer composed of a large subunit (PMDh-L) and a small subunit (PMDh-S).

The enzyme catalyses (R)-5-phosphomevalonate = (2E)-3-methyl-5-phosphooxypent-2-enoate + H2O. It functions in the pathway isoprenoid biosynthesis; isopentenyl diphosphate biosynthesis via mevalonate pathway. Functionally, component of a hydro-lyase that catalyzes the dehydration of mevalonate 5-phosphate (MVA5P) to form trans-anhydromevalonate 5-phosphate (tAHMP). Involved in the archaeal mevalonate (MVA) pathway, which provides fundamental precursors for isoprenoid biosynthesis, such as isopentenyl diphosphate (IPP) and dimethylallyl diphosphate (DMAPP). This Thermococcus gammatolerans (strain DSM 15229 / JCM 11827 / EJ3) protein is Phosphomevalonate dehydratase small subunit.